Here is a 426-residue protein sequence, read N- to C-terminus: Serine--tRNA ligase (426 aa).

233-235 (TAE) provides a ligand contact to L-serine. Residue 264 to 266 (RSE) participates in ATP binding. Glu287 serves as a coordination point for L-serine. 351–354 (EISS) serves as a coordination point for ATP. Ser387 is a binding site for L-serine.

The protein belongs to the class-II aminoacyl-tRNA synthetase family. Type-1 seryl-tRNA synthetase subfamily. In terms of assembly, homodimer. The tRNA molecule binds across the dimer.

It is found in the cytoplasm. The enzyme catalyses tRNA(Ser) + L-serine + ATP = L-seryl-tRNA(Ser) + AMP + diphosphate + H(+). It catalyses the reaction tRNA(Sec) + L-serine + ATP = L-seryl-tRNA(Sec) + AMP + diphosphate + H(+). It participates in aminoacyl-tRNA biosynthesis; selenocysteinyl-tRNA(Sec) biosynthesis; L-seryl-tRNA(Sec) from L-serine and tRNA(Sec): step 1/1. Catalyzes the attachment of serine to tRNA(Ser). Is also able to aminoacylate tRNA(Sec) with serine, to form the misacylated tRNA L-seryl-tRNA(Sec), which will be further converted into selenocysteinyl-tRNA(Sec). This chain is Serine--tRNA ligase, found in Azotobacter vinelandii (strain DJ / ATCC BAA-1303).